A 282-amino-acid chain; its full sequence is Bifunctional protein FolD (282 aa).

NADP(+)-binding positions include 165 to 167, serine 190, and isoleucine 231; that span reads NRS.

This sequence belongs to the tetrahydrofolate dehydrogenase/cyclohydrolase family. As to quaternary structure, homodimer.

It carries out the reaction (6R)-5,10-methylene-5,6,7,8-tetrahydrofolate + NADP(+) = (6R)-5,10-methenyltetrahydrofolate + NADPH. It catalyses the reaction (6R)-5,10-methenyltetrahydrofolate + H2O = (6R)-10-formyltetrahydrofolate + H(+). The protein operates within one-carbon metabolism; tetrahydrofolate interconversion. Functionally, catalyzes the oxidation of 5,10-methylenetetrahydrofolate to 5,10-methenyltetrahydrofolate and then the hydrolysis of 5,10-methenyltetrahydrofolate to 10-formyltetrahydrofolate. The protein is Bifunctional protein FolD of Clostridium botulinum (strain Okra / Type B1).